Consider the following 765-residue polypeptide: 5-methyltetrahydropteroyltriglutamate--homocysteine methyltransferase (765 aa).

Residues 16 to 19 and Lys121 each bind 5-methyltetrahydropteroyltri-L-glutamate; that span reads RELK. Residues 441–443 and Glu494 each bind L-homocysteine; that span reads IGS. L-methionine-binding positions include 441–443 and Glu494; that span reads IGS. 5-methyltetrahydropteroyltri-L-glutamate contacts are provided by residues 525–526 and Trp571; that span reads RC. Asp609 serves as a coordination point for L-homocysteine. An L-methionine-binding site is contributed by Asp609. Glu615 contributes to the 5-methyltetrahydropteroyltri-L-glutamate binding site. Zn(2+) contacts are provided by His651, Cys653, and Glu675. His704 (proton donor) is an active-site residue. Cys736 lines the Zn(2+) pocket.

It belongs to the vitamin-B12 independent methionine synthase family. Requires Zn(2+) as cofactor.

It catalyses the reaction 5-methyltetrahydropteroyltri-L-glutamate + L-homocysteine = tetrahydropteroyltri-L-glutamate + L-methionine. Its pathway is amino-acid biosynthesis; L-methionine biosynthesis via de novo pathway; L-methionine from L-homocysteine (MetE route): step 1/1. Functionally, catalyzes the transfer of a methyl group from 5-methyltetrahydrofolate to homocysteine resulting in methionine formation. This Saccharophagus degradans (strain 2-40 / ATCC 43961 / DSM 17024) protein is 5-methyltetrahydropteroyltriglutamate--homocysteine methyltransferase.